The following is a 368-amino-acid chain: DNA replication and repair protein RecF (368 aa).

30-37 (GNNAQGKT) is a binding site for ATP.

Belongs to the RecF family.

Its subcellular location is the cytoplasm. The RecF protein is involved in DNA metabolism; it is required for DNA replication and normal SOS inducibility. RecF binds preferentially to single-stranded, linear DNA. It also seems to bind ATP. The sequence is that of DNA replication and repair protein RecF from Streptococcus pyogenes serotype M12 (strain MGAS2096).